We begin with the raw amino-acid sequence, 473 residues long: Sun domain-containing protein 1 (473 aa).

Residues 1–47 (MALRHTISPQFSNRHSPPVTRSVSRTGVHQPLDTSTPVTRRDSQPGT) are disordered. Positions 7–47 (ISPQFSNRHSPPVTRSVSRTGVHQPLDTSTPVTRRDSQPGT) are enriched in polar residues. Coiled coils occupy residues 163 to 191 (ISNL…LENV) and 204 to 235 (EELK…STKI). The disordered stretch occupies residues 237–257 (HSTPEKAPETAPTASLPPSSQ). The span at 248-257 (PTASLPPSSQ) shows a compositional bias: polar residues. Residues 262 to 282 (HITRRALLGVNVANSLIGASI) form a helical membrane-spanning segment. The SUN domain occupies 279 to 443 (GASIDHSCSS…YLIRVYGEPV (165 aa)). The interval 443-473 (VDPPKETQPMTDNGTESKLESAIVNSVSETA) is disordered.

It localises to the nucleus membrane. Its subcellular location is the nucleus envelope. Involved in centrosome attachment to the nucleus. Required for zyg-12 localization to the nuclear envelope. Together with pot-1, it is required to anchor telomeres to the nuclear envelope in embryos. The sequence is that of Sun domain-containing protein 1 from Caenorhabditis elegans.